A 206-amino-acid polypeptide reads, in one-letter code: Large ribosomal subunit protein bL17 (206 aa).

Positions 130-141 are enriched in basic and acidic residues; it reads ERARGTRFEARR. Positions 130 to 206 are disordered; it reads ERARGTRFEA…SGAGEQNSAN (77 aa). Composition is skewed to low complexity over residues 160–181 and 189–200; these read TAAAVAVEAAEPAETPAEGAAG and DDSGIGDDSGAG.

It belongs to the bacterial ribosomal protein bL17 family. Part of the 50S ribosomal subunit. Contacts protein L32.

In Frankia casuarinae (strain DSM 45818 / CECT 9043 / HFP020203 / CcI3), this protein is Large ribosomal subunit protein bL17.